The chain runs to 1133 residues: Myb-binding protein 1A (1133 aa).

Disordered stretches follow at residues 1 to 62, 718 to 764, 924 to 943, and 1111 to 1133; these read MKSK…ENTA, PLSK…DAES, GEEH…SRQA, and KKVA…EEST. Basic and acidic residues-rich tracts occupy residues 20–35 and 50–60; these read KAKE…KSEA and EKPAETEEKEN. 2 stretches are compositionally biased toward acidic residues: residues 725–735 and 744–762; these read GEEESDDELDK and DDSE…EDDA.

Belongs to the MYBBP1A family. Interacts with nclb.

It is found in the cytoplasm. It localises to the nucleus. Its subcellular location is the nucleolus. In terms of biological role, has a role in rRNA biogenesis, cell proliferation and tissue growth by contributing to the localization of nclb to the nucleolus. This chain is Myb-binding protein 1A, found in Drosophila melanogaster (Fruit fly).